We begin with the raw amino-acid sequence, 1083 residues long: Neisserial autotransporter lipoprotein NalP (1083 aa).

Positions 1-27 (MRTTPTFPTKTFKPTAMALAVATTLSA) are cleaved as a signal peptide. A lipid anchor (N-palmitoyl cysteine) is attached at Cys28. Cys28 carries S-diacylglycerol cysteine lipidation. The Peptidase S8 domain maps to 111–483 (NDAYKNLINL…WGLLDAGKAM (373 aa)). Active-site charge relay system residues include Asp139, His211, and Ser427. Positions 809–1083 (DGLDHNGTGL…SGRVGVGYRF (275 aa)) constitute an Autotransporter domain. 12 beta stranded membrane-spanning segments follow: residues 819 to 828 (RVIAQTQQDG), 844 to 852 (TQTVGIAAK), 858 to 866 (TAAATLGMG), 883 to 891 (SLFAGIRHD), 897 to 906 (YLKGLFSYGR), 931 to 941 (QLGALGGVNVP), 948 to 958 (LTVEGGLRYDL), 984 to 994 (VGLAGLKLSQP), 1000 to 1010 (VLFATAGVERD), 1041 to 1052 (RLVAGLGADVEF), 1057 to 1066 (NGLARYSYAG), and 1074 to 1083 (SGRVGVGYRF).

Belongs to the peptidase S8 family. A fusion protein of the first 44 residues with beta-lactamase is lipidated in E.coli, strongly suggesting this is a lipoprotein in situ. The lipidated form is briefly retained on the cell surface which allows it to process its endogenous substrates on the cell surface before the passenger domain is released into the medium.

The protein localises to the cell outer membrane. It localises to the cell surface. The protein resides in the secreted. In terms of biological role, major human immunogenic protein. Autotransporter with a secreted protease domain involved in processing other autotransporter proteins including App and IgA. Probably autoprocesses to release the about 70 kDa passenger domain. Processes the lactoferrin receptor lipoprotein subunit (LbpB) extracellularly, releasing it from the cell surface. LbpB release protects bacteria against complement-mediated killing by anti-LbpB antibodies. Processes NHBA. Lipidation slows its auto-processing, probably allowing it to act on endogenous substrates on the cell surface before the passenger domain is released into the medium. The C-terminal beta-barrel domain inserts into the outer membrane where it probably exports the N-terminal passenger domain. Both the cell surface protein (Neisserial autotransporter lipoprotein NalP) and the passenger domain cleave human (host) complement factor C3, generating a shorter alpha chain and a longer beta chain than normal. Its function is as follows. Plays a role in extracellular-DNA (eDNA) mediated biofilm formation. In some strains (including cc32 strain H44/76 but not cc11 strain B16B6) eDNA stimulates biofilm formation. When NalP is not expressed (and no longer processes NHBA or IgA) biofilm formation increases. This is probably because the number of positively charged, DNA-binding peptides on the cell surface rises, resulting in increased biofilm formation. Functionally, cleaves human (host) complement factor C3, generating a shorter alpha chain and a longer beta chain than normal. Does not act on mouse or rabbit C3. Cleavage causes C3b degradation by human CFI and CFH, decreases deposition of C3b on the bacteria surface and probably facilitates complement escape. The protein is Neisserial autotransporter lipoprotein NalP of Neisseria meningitidis serogroup B / serotype 15 (strain H44/76).